The primary structure comprises 179 residues: Large ribosomal subunit protein uL5 (179 aa).

Belongs to the universal ribosomal protein uL5 family. In terms of assembly, part of the 50S ribosomal subunit; part of the 5S rRNA/L5/L18/L25 subcomplex. Contacts the 5S rRNA and the P site tRNA. Forms a bridge to the 30S subunit in the 70S ribosome.

Functionally, this is one of the proteins that bind and probably mediate the attachment of the 5S RNA into the large ribosomal subunit, where it forms part of the central protuberance. In the 70S ribosome it contacts protein S13 of the 30S subunit (bridge B1b), connecting the 2 subunits; this bridge is implicated in subunit movement. Contacts the P site tRNA; the 5S rRNA and some of its associated proteins might help stabilize positioning of ribosome-bound tRNAs. The chain is Large ribosomal subunit protein uL5 from Deinococcus geothermalis (strain DSM 11300 / CIP 105573 / AG-3a).